The chain runs to 334 residues: Oligopeptide transport ATP-binding protein OppF (334 aa).

The region spanning 12-265 (LEIADLKVHF…PLHPYTKALM (254 aa)) is the ABC transporter domain. 57 to 64 (GESGCGKS) contacts ATP.

This sequence belongs to the ABC transporter superfamily. In terms of assembly, the complex is composed of two ATP-binding proteins (OppD and OppF), two transmembrane proteins (OppB and OppC) and a solute-binding protein (OppA).

It is found in the cell inner membrane. It catalyses the reaction a [peptide](out) + ATP + H2O = a [peptide](in) + ADP + phosphate + H(+). The enzyme catalyses L-alanyl-gamma-D-glutamyl-meso-2,6-diaminopimelate(out) + ATP + H2O = L-alanyl-gamma-D-glutamyl-meso-2,6-diaminopimelate(in) + ADP + phosphate + H(+). Functionally, part of the ABC transporter complex OppABCDF involved in the uptake of oligopeptides, including the cell wall murein tripeptide L-alanyl-gamma-D-glutamyl-meso-diaminopimelate. Probably responsible for energy coupling to the transport system. Plays an important nutritional role and is involved in the recycling of cell wall peptides. The polypeptide is Oligopeptide transport ATP-binding protein OppF (Salmonella typhimurium (strain LT2 / SGSC1412 / ATCC 700720)).